A 304-amino-acid chain; its full sequence is Protein ML (304 aa).

In terms of biological role, blocks host IRF3 and IRF7, thereby inhibiting IFN-beta expression and activation of host antiviral state. This is Protein ML from Thogoto virus (isolate SiAr 126) (Tho).